Here is a 497-residue protein sequence, read N- to C-terminus: Pseudooxynicotine dehydrogenase (497 aa).

Residues 1 to 43 constitute a signal peptide (tat-type signal); it reads MANDKGDISKDGVSRRKFLGGAVIGAAAAAGVGSQILSLSATA. 7 residues coordinate FAD: A70, E89, R97, W114, V286, S462, and I472.

It belongs to the flavin monoamine oxidase family. In terms of assembly, homodimer. Requires FAD as cofactor. Post-translationally, predicted to be exported by the Tat system. The position of the signal peptide cleavage has not been experimentally proven.

The protein localises to the periplasm. It carries out the reaction pseudooxynicotine + 2 Fe(III)-[cytochrome c] + H2O = 4-oxo-4-(pyridin-3-yl)butanal + methylamine + 2 Fe(II)-[cytochrome c] + 2 H(+). Its pathway is alkaloid degradation; nicotine degradation. With respect to regulation, strongly inhibited by Ag(+), Co(2+), Cu(2+) and Hg(2+). In terms of biological role, involved in nicotine degradation. Catalyzes the deamination of pseudooxynicotine to 3-succinoylsemialdehyde-pyridine. This Pseudomonas sp protein is Pseudooxynicotine dehydrogenase.